Consider the following 207-residue polypeptide: Glycerol-3-phosphate acyltransferase (207 aa).

5 helical membrane passes run 3 to 23 (LIGLLIVAYLLGAIPNGVWVG), 54 to 74 (TIVMVLDIAKGSVATLLPIVF), 81 to 101 (GTATPLLFGLFAVLGHTVSIF), 122 to 142 (PIMFVIAAGFWVSLIYWTSIV), and 158 to 178 (LVFQDWYLTGIALVLTVFVFY).

This sequence belongs to the PlsY family. Probably interacts with PlsX.

It is found in the cell membrane. The enzyme catalyses an acyl phosphate + sn-glycerol 3-phosphate = a 1-acyl-sn-glycero-3-phosphate + phosphate. Its pathway is lipid metabolism; phospholipid metabolism. Functionally, catalyzes the transfer of an acyl group from acyl-phosphate (acyl-PO(4)) to glycerol-3-phosphate (G3P) to form lysophosphatidic acid (LPA). This enzyme utilizes acyl-phosphate as fatty acyl donor, but not acyl-CoA or acyl-ACP. This chain is Glycerol-3-phosphate acyltransferase, found in Levilactobacillus brevis (strain ATCC 367 / BCRC 12310 / CIP 105137 / JCM 1170 / LMG 11437 / NCIMB 947 / NCTC 947) (Lactobacillus brevis).